The following is a 347-amino-acid chain: 3-isopropylmalate dehydrogenase (347 aa).

76-87 provides a ligand contact to NAD(+); the sequence is GPKWTDPNNRPE. 4 residues coordinate substrate: Arg-94, Arg-104, Arg-132, and Asp-217. Residues Asp-217, Asp-241, and Asp-245 each contribute to the Mg(2+) site. 275 to 287 serves as a coordination point for NAD(+); sequence GSAPDIANEDKAN.

It belongs to the isocitrate and isopropylmalate dehydrogenases family. LeuB type 1 subfamily. In terms of assembly, homodimer. Requires Mg(2+) as cofactor. Mn(2+) is required as a cofactor.

The protein localises to the cytoplasm. It carries out the reaction (2R,3S)-3-isopropylmalate + NAD(+) = 4-methyl-2-oxopentanoate + CO2 + NADH. Its pathway is amino-acid biosynthesis; L-leucine biosynthesis; L-leucine from 3-methyl-2-oxobutanoate: step 3/4. In terms of biological role, catalyzes the oxidation of 3-carboxy-2-hydroxy-4-methylpentanoate (3-isopropylmalate) to 3-carboxy-4-methyl-2-oxopentanoate. The product decarboxylates to 4-methyl-2 oxopentanoate. This chain is 3-isopropylmalate dehydrogenase, found in Staphylococcus epidermidis (strain ATCC 12228 / FDA PCI 1200).